Consider the following 306-residue polypeptide: MSTLGHQYDNSLVSNAFGFLRLPMNFMPYESDADWVITGVPFDMATSGRAGGRHGPAAIRQVSTNLAWEHNRFPWNFDMRERLNVVDCGDLVYAFGDAREMSEKLQAHAEKLLAAGKRMLSFGGDHFVTLPLLRAHAKHFGKMALVHFDAHTDTYANGCEFDHGTMFYTAPNEGLIDPNHSVQIGIRTEFDKDNGFTVLDAGQVNDRSVDDVIAQVKQIVGDMPVYLTFDIDCLDPAFAPGTGTPVIGGLTSDRAIKLVRGLKDLNIVGMDVVEVAPAYDQSEITALAAATLALEMLYIQAAKKGE.

Mn(2+) contacts are provided by H126, D149, H151, D153, D230, and D232.

It belongs to the arginase family. Agmatinase subfamily. The cofactor is Mn(2+).

It carries out the reaction agmatine + H2O = urea + putrescine. Its pathway is amine and polyamine biosynthesis; putrescine biosynthesis via agmatine pathway; putrescine from agmatine: step 1/1. Its function is as follows. Catalyzes the formation of putrescine from agmatine. In Klebsiella pneumoniae (strain 342), this protein is Agmatinase.